A 152-amino-acid chain; its full sequence is Fibroblast growth factor 1 (152 aa).

Ala-2 is modified (N-acetylalanine). Positions 2-15 are excised as a propeptide; sequence AEGEITTFTALTEK. Asn-33 is a binding site for heparin. The heparin-binding stretch occupies residues 127-143; it reads KKNGSCKRGPRTHYGQK.

Belongs to the heparin-binding growth factors family. In terms of assembly, monomer. Homodimer. Interacts with FGFR1, FGFR2, FGFR3 and FGFR4. Affinity between fibroblast growth factors (FGFs) and their receptors is increased by heparan sulfate glycosaminoglycans that function as coreceptors. Found in a complex with FGFBP1, FGF1 and FGF2. Interacts with FGFBP1. Part of a Cu(2+)-dependent multiprotein aggregate containing FGF1, S100A13 and SYT1. Interacts with SYT1. Interacts with S100A13. Interacts with LRRC59. Interacts with CSNKA, CSNKB and FIBP. While binding with LRRC59, CSNKA and FIBP seem mutually exclusive, CSNKB and FIBP may cooperatively interact with FGF1. Forms a ternary complex with FGFR1 and ITGAV:ITGB3 and induces the recruitment of PTPN11 to the complex. Post-translationally, in the nucleus, phosphorylated by PKC/PRKCD.

The protein localises to the secreted. Its subcellular location is the cytoplasm. The protein resides in the cell cortex. It is found in the cytosol. It localises to the nucleus. In terms of biological role, plays an important role in the regulation of cell survival, cell division, angiogenesis, cell differentiation and cell migration. Functions as a potent mitogen in vitro. Acts as a ligand for FGFR1 and integrins. Binds to FGFR1 in the presence of heparin leading to FGFR1 dimerization and activation via sequential autophosphorylation on tyrosine residues which act as docking sites for interacting proteins, leading to the activation of several signaling cascades. Binds to integrin ITGAV:ITGB3. Its binding to integrin, subsequent ternary complex formation with integrin and FGFR1, and the recruitment of PTPN11 to the complex are essential for FGF1 signaling. Induces the phosphorylation and activation of FGFR1, FRS2, MAPK3/ERK1, MAPK1/ERK2 and AKT1. Can induce angiogenesis. This chain is Fibroblast growth factor 1 (FGF1), found in Sus scrofa (Pig).